An 86-amino-acid chain; its full sequence is Candiduxin-2 (86 aa).

An N-terminal signal peptide occupies residues 1–21 (MKTLLLTLVVLTIACLDLGYT). Intrachain disulfides connect Cys-24–Cys-45, Cys-38–Cys-62, Cys-66–Cys-78, and Cys-79–Cys-84.

Belongs to the three-finger toxin family. Short-chain subfamily. Orphan group IX sub-subfamily. As to expression, expressed by the venom gland.

It localises to the secreted. The polypeptide is Candiduxin-2 (Bungarus candidus (Malayan krait)).